The primary structure comprises 492 residues: B3 domain-containing protein REM3 (492 aa).

A DNA-binding region (TF-B3 1) is located at residues 12 to 104 (NRPFFVRSLA…VFHVTPSGRS (93 aa)). The segment covering 105–116 (FSQIRTSSSSGD) has biased composition (low complexity). Residues 105-134 (FSQIRTSSSSGDYDSDDDDDEAGDDDSDSK) form a disordered region. The segment covering 117-131 (YDSDDDDDEAGDDDS) has biased composition (acidic residues). 2 consecutive DNA-binding regions (TF-B3) follow at residues 154 to 250 (YCLL…LCFK) and 286 to 382 (FLTV…FCSE). The span at 385 to 395 (IEQEEAPEERG) shows a compositional bias: basic and acidic residues. The disordered stretch occupies residues 385–427 (IEQEEAPEERGTPLPKRARVSAEVGHSRRTQAPNKSSDDPKIL).

It is found in the nucleus. This is B3 domain-containing protein REM3 (REM3) from Arabidopsis thaliana (Mouse-ear cress).